We begin with the raw amino-acid sequence, 243 residues long: High affinity immunoglobulin epsilon receptor subunit beta (243 aa).

Residues 1 to 48 (MDTENKSRADLALPNPQESPSAPDIELLEASPPAKALPEKPASPPPQQ) are disordered. At 1-59 (MDTENKSRADLALPNPQESPSAPDIELLEASPPAKALPEKPASPPPQQTWQSFLKKELE) the chain is on the cytoplasmic side. The helical transmembrane segment at 60 to 79 (FLGVTQVLVGLICLCFGTVV) threads the bilayer. Over 80-97 (CSTLQTSDFDDEVLLLYR) the chain is Extracellular. A helical transmembrane segment spans residues 98–117 (AGYPFWGAVLFVLSGFLSIM). Residues 118–130 (SERKNTLYLVRGS) are Cytoplasmic-facing. A helical transmembrane segment spans residues 131 to 150 (LGANIVSSIAAGLGIAILIL). At 151-179 (NLSNNSAYMNYCKDITEDDGCFVTSFITE) the chain is on the extracellular side. Residues 180-199 (LVLMLLFLTILAFCSAVLLI) form a helical membrane-spanning segment. Residues 200–243 (IYRIGQEFERSKVPDDRLYEELHVYSPIYSALEDTREASAPVVS) lie on the Cytoplasmic side of the membrane. A phosphotyrosine mark is found at Tyr-218 and Tyr-224. Ser-225 carries the post-translational modification Phosphoserine. A Phosphotyrosine modification is found at Tyr-228.

Belongs to the MS4A family. As to quaternary structure, tetramer of an alpha chain, a beta chain, and two disulfide linked gamma chains. Binds LILRB1. Interacts with FES/FPS and LYN. Interacts with FGR. Phosphorylated on tyrosine residues by LYN.

Its subcellular location is the membrane. Its function is as follows. High affinity receptor that binds to the Fc region of immunoglobulins epsilon. Aggregation of FCER1 by multivalent antigens is required for the full mast cell response, including the release of preformed mediators (such as histamine) by degranulation and de novo production of lipid mediators and cytokines. Also mediates the secretion of important lymphokines. Binding of allergen to receptor-bound IgE leads to cell activation and the release of mediators responsible for the manifestations of allergy. The polypeptide is High affinity immunoglobulin epsilon receptor subunit beta (Ms4a2) (Rattus norvegicus (Rat)).